The chain runs to 395 residues: Xylose isomerase (395 aa).

Catalysis depends on residues histidine 54 and aspartate 57. Positions 181, 217, 220, 245, 255, 257, and 293 each coordinate Mg(2+).

It belongs to the xylose isomerase family. As to quaternary structure, homotetramer. Requires Mg(2+) as cofactor.

It localises to the cytoplasm. The enzyme catalyses alpha-D-xylose = alpha-D-xylulofuranose. In Arthrobacter sp. (strain NRRL B3728), this protein is Xylose isomerase (xylA).